The following is a 317-amino-acid chain: Melanocyte-stimulating hormone receptor (317 aa).

At 1-37 (MPMQGAQRKLLGSLNSTPTATSNLGLAANHTGAPCLE) the chain is on the extracellular side. N-linked (GlcNAc...) asparagine glycosylation is present at Asn29. Residues 38-63 (VSIPDGLFLSLGLVSLVENVLVVAAI) traverse the membrane as a helical segment. Over 64–72 (AKNRNLHSS) the chain is Cytoplasmic. A helical membrane pass occupies residues 73 to 93 (MYCFICCLALSDLLVSGSNML). Over 94-118 (ETAVILLLEAGALATRTSAVQRLHN) the chain is Extracellular. The helical transmembrane segment at 119–140 (TIDVLTCSSMLCSLCFLGAIAV) threads the bilayer. Residues 141 to 163 (DRYISIFYALRYHSIVTLPRTQR) lie on the Cytoplasmic side of the membrane. Residues 164-183 (VIAAIWVASVLSSTLFITYY) form a helical membrane-spanning segment. The Extracellular segment spans residues 184 to 191 (DHAAVLLC). The helical transmembrane segment at 192–211 (LVVFFLAMLVLMAVLYVHML) threads the bilayer. The Cytoplasmic segment spans residues 212–240 (ARACQHAHGIIRLHKRQSPAHQGFGLRGA). A helical membrane pass occupies residues 241-266 (ATLTILLGIFFLCWGPFFLHLTLVVF). Over 267-279 (CPQHLTCSCIFKN) the chain is Extracellular. A helical transmembrane segment spans residues 280–300 (FKVFLTLIICNTIIDPLIYAF). Over 301–317 (RSQELRRTLKEVLLCSW) the chain is Cytoplasmic. Residue Cys315 is the site of S-palmitoyl cysteine attachment.

Belongs to the G-protein coupled receptor 1 family. As to quaternary structure, interacts with MGRN1, but does not undergo MGRN1-mediated ubiquitination; this interaction competes with GNAS-binding and thus inhibits agonist-induced cAMP production. Interacts with OPN3; the interaction results in a decrease in MC1R-mediated cAMP signaling and ultimately a decrease in melanin production in melanocytes.

The protein localises to the cell membrane. Functionally, receptor for MSH (alpha, beta and gamma) and ACTH. The activity of this receptor is mediated by G proteins which activate adenylate cyclase. Mediates melanogenesis, the production of eumelanin (black/brown) and phaeomelanin (red/yellow), via regulation of cAMP signaling in melanocytes. The sequence is that of Melanocyte-stimulating hormone receptor (MC1R) from Saguinus imperator (Emperor tamarin).